The primary structure comprises 687 residues: Polyphosphate kinase (687 aa).

Residue Asn-45 coordinates ATP. Positions 375 and 405 each coordinate Mg(2+). His-435 functions as the Phosphohistidine intermediate in the catalytic mechanism. ATP is bound by residues Tyr-472, Arg-568, and His-596.

This sequence belongs to the polyphosphate kinase 1 (PPK1) family. Requires Mg(2+) as cofactor. In terms of processing, an intermediate of this reaction is the autophosphorylated ppk in which a phosphate is covalently linked to a histidine residue through a N-P bond.

The enzyme catalyses [phosphate](n) + ATP = [phosphate](n+1) + ADP. Its function is as follows. Catalyzes the reversible transfer of the terminal phosphate of ATP to form a long-chain polyphosphate (polyP). The protein is Polyphosphate kinase of Burkholderia cenocepacia (strain HI2424).